Here is a 251-residue protein sequence, read N- to C-terminus: Hydroxyacylglutathione hydrolase (251 aa).

Zn(2+) contacts are provided by histidine 53, histidine 55, aspartate 57, histidine 58, histidine 110, aspartate 127, and histidine 165.

The protein belongs to the metallo-beta-lactamase superfamily. Glyoxalase II family. As to quaternary structure, monomer. It depends on Zn(2+) as a cofactor.

It carries out the reaction an S-(2-hydroxyacyl)glutathione + H2O = a 2-hydroxy carboxylate + glutathione + H(+). It functions in the pathway secondary metabolite metabolism; methylglyoxal degradation; (R)-lactate from methylglyoxal: step 2/2. Thiolesterase that catalyzes the hydrolysis of S-D-lactoyl-glutathione to form glutathione and D-lactic acid. The sequence is that of Hydroxyacylglutathione hydrolase from Escherichia coli O45:K1 (strain S88 / ExPEC).